The following is a 332-amino-acid chain: HTH-type transcriptional regulator RegA (332 aa).

Positions 1–57 (MATSIKDVAREAGVSIATVSRVLNDIDVVNEDTKKKVLDAIKELGYRPNIVARSLKT) constitute an HTH lacI-type domain. A DNA-binding region (H-T-H motif) is located at residues 5–24 (IKDVAREAGVSIATVSRVLN).

In terms of biological role, involved in the regulation of amylase production. This chain is HTH-type transcriptional regulator RegA (regA), found in Clostridium saccharobutylicum.